Here is a 641-residue protein sequence, read N- to C-terminus: Acetyl-coenzyme A synthetase (641 aa).

CoA-binding positions include 186–189 (RGGK) and Thr304. ATP is bound by residues 380 to 382 (GEP), 404 to 409 (DTWWQT), Asp493, and Arg508. Position 516 (Ser516) interacts with CoA. Arg519 is a binding site for ATP. Residues Val530, His532, and Ile535 each coordinate Mg(2+). Residue Lys602 is modified to N6-acetyllysine.

The protein belongs to the ATP-dependent AMP-binding enzyme family. The cofactor is Mg(2+). Post-translationally, acetylated. Deacetylation by the SIR2-homolog deacetylase activates the enzyme.

The catalysed reaction is acetate + ATP + CoA = acetyl-CoA + AMP + diphosphate. Functionally, catalyzes the conversion of acetate into acetyl-CoA (AcCoA), an essential intermediate at the junction of anabolic and catabolic pathways. AcsA undergoes a two-step reaction. In the first half reaction, AcsA combines acetate with ATP to form acetyl-adenylate (AcAMP) intermediate. In the second half reaction, it can then transfer the acetyl group from AcAMP to the sulfhydryl group of CoA, forming the product AcCoA. This is Acetyl-coenzyme A synthetase from Gamma-proteobacterium EBAC31A08.